We begin with the raw amino-acid sequence, 207 residues long: Probable GTP-binding protein EngB (207 aa).

In terms of domain architecture, EngB-type G spans 25 to 202 (DVPEIAFVGR…ATLLWQWAHP (178 aa)). GTP contacts are provided by residues 33–40 (GRSNAGKS), 60–64 (GRTQH), 82–85 (DLPG), 152–155 (TKAD), and 181–183 (FSA). Mg(2+) is bound by residues Ser40 and Thr62.

Belongs to the TRAFAC class TrmE-Era-EngA-EngB-Septin-like GTPase superfamily. EngB GTPase family. Requires Mg(2+) as cofactor.

Its function is as follows. Necessary for normal cell division and for the maintenance of normal septation. The protein is Probable GTP-binding protein EngB of Albidiferax ferrireducens (strain ATCC BAA-621 / DSM 15236 / T118) (Rhodoferax ferrireducens).